The chain runs to 308 residues: Porphobilinogen deaminase (308 aa).

C240 is subject to S-(dipyrrolylmethanemethyl)cysteine.

It belongs to the HMBS family. As to quaternary structure, monomer. It depends on dipyrromethane as a cofactor.

It catalyses the reaction 4 porphobilinogen + H2O = hydroxymethylbilane + 4 NH4(+). It functions in the pathway porphyrin-containing compound metabolism; protoporphyrin-IX biosynthesis; coproporphyrinogen-III from 5-aminolevulinate: step 2/4. In terms of biological role, tetrapolymerization of the monopyrrole PBG into the hydroxymethylbilane pre-uroporphyrinogen in several discrete steps. The sequence is that of Porphobilinogen deaminase from Desulfitobacterium hafniense (strain DSM 10664 / DCB-2).